A 451-amino-acid polypeptide reads, in one-letter code: POU domain, class 3, transcription factor 1 (451 aa).

Disordered regions lie at residues 1-21 (MATT…GTGP), 69-114 (AHPQ…GFHA), 127-154 (AWAQ…HQPQ), 186-253 (GLHH…PSSD), and 395-451 (KRMT…GSVQ). Gly residues-rich tracts occupy residues 11–20 (GPGGGAGGTG), 76–85 (TGGGGGGDWA), and 95–112 (AGGG…GGGF). Over residues 190–199 (ALHEDGHEAQ) the composition is skewed to basic and acidic residues. The span at 220–232 (AGGLHAAAAHLHP) shows a compositional bias: low complexity. The region spanning 247–321 (EDAPSSDDLE…LLNKWLEETD (75 aa)) is the POU-specific domain. The segment at residues 339 to 398 (KRKKRTSIEVGVKGALESHFLKCPKPSAHEITGLADSLQLEKEVVRVWFCNRRQKEKRMT) is a DNA-binding region (homeobox). The segment covering 427 to 436 (PSAPPPPPPA) has biased composition (pro residues).

It belongs to the POU transcription factor family. Class-3 subfamily. Expressed in embryonal stem cells and in the developing brain.

It is found in the nucleus. In terms of biological role, transcription factor that binds to the octamer motif (5'-ATTTGCAT-3'). Acts as a transcriptional activator when binding cooperatively with SOX4, SOX11, or SOX12 to gene promoters. Acts as a transcriptional repressor of myelin-specific genes. In Homo sapiens (Human), this protein is POU domain, class 3, transcription factor 1 (POU3F1).